We begin with the raw amino-acid sequence, 634 residues long: Ras and EF-hand domain-containing protein homolog (634 aa).

2 consecutive EF-hand domains span residues 5–33 (EVEN…CPQL) and 33–68 (LDDN…TVQH). Residues Asp-46, Asp-48, Ser-50, Lys-52, and Glu-57 each coordinate Ca(2+). The stretch at 169 to 310 (LSEKKHENER…RCEFDQKQDE (142 aa)) forms a coiled coil. Residues 212-234 (ARQEERDRLTKEKEEMRQRMSDE) form a disordered region. GTP contacts are provided by residues 449-454 (AVGKSS), 552-555 (NKVD), and 585-586 (AL). Positions 632-634 (RGS) are cleaved as a propeptide — removed in mature form.

The protein belongs to the small GTPase superfamily. Rab family. As to quaternary structure, homodimer.

Its subcellular location is the cytoplasm. The protein resides in the perinuclear region. In terms of biological role, binds GTP and GDP. Plays a role in uterine seam cell development. In Caenorhabditis elegans, this protein is Ras and EF-hand domain-containing protein homolog.